The chain runs to 192 residues: Adenine phosphoribosyltransferase (192 aa).

The protein belongs to the purine/pyrimidine phosphoribosyltransferase family. Homodimer.

The protein resides in the cytoplasm. It catalyses the reaction AMP + diphosphate = 5-phospho-alpha-D-ribose 1-diphosphate + adenine. Its pathway is purine metabolism; AMP biosynthesis via salvage pathway; AMP from adenine: step 1/1. In terms of biological role, catalyzes a salvage reaction resulting in the formation of AMP, that is energically less costly than de novo synthesis. The protein is Adenine phosphoribosyltransferase of Corynebacterium efficiens (strain DSM 44549 / YS-314 / AJ 12310 / JCM 11189 / NBRC 100395).